Consider the following 624-residue polypeptide: ATP-dependent zinc metalloprotease FtsH (624 aa).

At 1-7 (MPRAPFS) the chain is on the cytoplasmic side. A helical membrane pass occupies residues 8-28 (LLALVLGLAFLAWAFSLAGTV). Over 29–103 (GAPSGTVNYT…VRVEPPQGQN (75 aa)) the chain is Periplasmic. Residues 104-124 (ALGFLWPLLLVGLLIGALYYF) traverse the membrane as a helical segment. At 125-624 (SRNGRAGPSD…VKPGGALGGA (500 aa)) the chain is on the cytoplasmic side. Residues Ala-159, 199–203 (GVGKT), and His-204 each bind ATP. His-418 is a binding site for Zn(2+). Glu-419 is an active-site residue. His-422 and Asp-493 together coordinate Zn(2+). The interval 595–624 (PLEAPEEAREEREPPRVVPKVKPGGALGGA) is disordered. The segment covering 600–609 (EEAREEREPP) has biased composition (basic and acidic residues).

The protein in the central section; belongs to the AAA ATPase family. In the C-terminal section; belongs to the peptidase M41 family. In terms of assembly, the isolated soluble domain (residues 126-624) forms a stable hexamer in which the AAA+ domains (residues 126-400) are alternatively open or closed. Requires Zn(2+) as cofactor.

The protein resides in the cell inner membrane. The proteolytic activity is dependent on ATP, both the ATPase and protease activities are inhibited by ADP. Acts as a processive, ATP-dependent zinc metallopeptidase for both cytoplasmic and membrane proteins. Plays a role in the quality control of integral membrane proteins. Functionally, degrades preferentially unfolded substrates in a processive, ATP-dependent manner, usually after hydrophobic residues. This chain is ATP-dependent zinc metalloprotease FtsH, found in Thermus thermophilus (strain ATCC 27634 / DSM 579 / HB8).